We begin with the raw amino-acid sequence, 3797 residues long: A-kinase anchor protein 9 (3797 aa).

The interval M1–Q140 is disordered. 2 stretches are compositionally biased toward polar residues: residues H50–R65 and E92–N108. Basic and acidic residues predominate over residues K115–E124. Residue S139 is modified to Phosphoserine. Coiled-coil stretches lie at residues Q140–Q607 and I640–N976. S1288 is subject to Phosphoserine. 3 disordered regions span residues S1643–S1668, V2323–F2343, and S2419–T2454. Composition is skewed to basic and acidic residues over residues D1648–S1668 and Q2328–F2343. Residues S1808–E2377 are a coiled coil. Polar residues predominate over residues K2438–T2454. The tract at residues D2498 to L2510 is PKA-RII subunit binding domain. Disordered regions lie at residues L2604–G2695 and M3271–M3296. The segment covering E2606–G2615 has biased composition (acidic residues). The segment covering P2642–P2669 has biased composition (basic and acidic residues). The stretch at L2975 to K3325 forms a coiled coil. Polar residues predominate over residues Q3279–K3294. Phosphoserine is present on residues S3732, S3755, and S3787.

In terms of assembly, interacts with the regulatory region of protein kinase N (PKN), protein phosphatase 2A (PP2A), protein phosphatase 1 (PP1) and the immature non-phosphorylated form of PKC epsilon. Interacts with CIP4 and FNBP1. Interacts with chloride intracellular channel proteins CLIC1, CLIC4 and CLIC5. CSNK1D binding promotes its centrosomal subcellular location. Interacts with GM130/GOLGA2; leading to recruitment to the Golgi apparatus. Interacts with KCNQ1; targets protein kinase A (PKA) catalytic and regulatory subunits and protein phosphatase 1 (PP1), to the heterodimer KCNQ1-KCNE1. Interacts with PDE4DIP isoform 2; this interaction stabilizes both proteins. In complex with PDE4DIP isoform 2, recruits CAMSAP2 to the Golgi apparatus. Forms a pericentrosomal complex with CDK5RAP2, EB1/MAPRE1 and PDE4DIP isoform 2; within this complex, MAPRE1 binding to CDK5RAP2 may be mediated by PDE4DIP. Interacts with MAPRE1 and MAPRE3. Interacts (via C-terminus) with CAMSAP2; this interaction is much stronger in the presence of PDE4DIP isoform 2. Interacts with CAMSAP3. Interacts (via C-terminus) with the gamma-tubulin ring complex (gamma-TuRC), composed of gamma-tubulin, TUBGCP2, TUBGCP3, TUBGCP4, TUBGCP5 and TUBGCP6.

The protein resides in the golgi apparatus. It is found in the cytoplasm. Its subcellular location is the cytoskeleton. The protein localises to the microtubule organizing center. It localises to the centrosome. In terms of biological role, scaffolding protein that assembles several protein kinases and phosphatases on the centrosome and Golgi apparatus. Required to maintain the integrity of the Golgi apparatus. Required for microtubule nucleation at the cis-side of the Golgi apparatus. Required for association of the centrosomes with the poles of the bipolar mitotic spindle during metaphase. In complex with PDE4DIP isoform 2/MMG8/SMYLE, recruits CAMSAP2 to the Golgi apparatus and tethers non-centrosomal minus-end microtubules to the Golgi, an important step for polarized cell movement. In complex with PDE4DIP isoform 2, EB1/MAPRE1 and CDK5RAP2, contributes to microtubules nucleation and extension also from the centrosome to the cell periphery. The protein is A-kinase anchor protein 9 (Akap9) of Mus musculus (Mouse).